Here is a 295-residue protein sequence, read N- to C-terminus: Acetaldehyde dehydrogenase (295 aa).

11 to 14 (SGNI) lines the NAD(+) pocket. Cys127 serves as the catalytic Acyl-thioester intermediate. NAD(+)-binding positions include 158-166 (SAGPGTRAN) and Asn270.

Belongs to the acetaldehyde dehydrogenase family.

It carries out the reaction acetaldehyde + NAD(+) + CoA = acetyl-CoA + NADH + H(+). The chain is Acetaldehyde dehydrogenase (nbaJ) from Geobacillus thermodenitrificans (strain NG80-2).